Reading from the N-terminus, the 85-residue chain is Small ribosomal subunit protein eS21 (85 aa).

Belongs to the eukaryotic ribosomal protein eS21 family. In terms of assembly, component of the 40S small ribosomal subunit.

It is found in the cytoplasm. Its subcellular location is the cytosol. The protein localises to the rough endoplasmic reticulum. The sequence is that of Small ribosomal subunit protein eS21 (RPS21) from Branchiostoma belcheri (Amphioxus).